The sequence spans 421 residues: uncharacterized protein (421 aa).

This is an uncharacterized protein from Escherichia coli (strain K12).